Consider the following 451-residue polypeptide: UPF0210 protein NMC1568 (451 aa).

The protein belongs to the UPF0210 family. In terms of assembly, homodimer.

The chain is UPF0210 protein NMC1568 from Neisseria meningitidis serogroup C / serotype 2a (strain ATCC 700532 / DSM 15464 / FAM18).